Here is a 219-residue protein sequence, read N- to C-terminus: Cytidylate kinase (219 aa).

Position 11-19 (11-19 (GTAGSGKTA)) interacts with ATP.

Belongs to the cytidylate kinase family. Type 1 subfamily.

Its subcellular location is the cytoplasm. It catalyses the reaction CMP + ATP = CDP + ADP. It carries out the reaction dCMP + ATP = dCDP + ADP. In Mesoplasma florum (strain ATCC 33453 / NBRC 100688 / NCTC 11704 / L1) (Acholeplasma florum), this protein is Cytidylate kinase.